The following is a 108-amino-acid chain: Replication restart protein PriB (108 aa).

In terms of domain architecture, SSB spans 11 to 108 (INRNQVIISG…VLHVRDTRII (98 aa)).

The protein belongs to the PriB family. In terms of assembly, homodimer. Interacts with PriA and DnaT. Component of the replication restart primosome. Primosome assembly occurs via a 'hand-off' mechanism. PriA binds to replication forks, subsequently PriB then DnaT bind; DnaT then displaces ssDNA to generate the helicase loading substrate.

Involved in the restart of stalled replication forks, which reloads the replicative helicase on sites other than the origin of replication; the PriA-PriB pathway is the major replication restart pathway. During primosome assembly it facilitates complex formation between PriA and DnaT on DNA; stabilizes PriA on DNA. Stimulates the DNA unwinding activity of PriA helicase. This Nitrosomonas europaea (strain ATCC 19718 / CIP 103999 / KCTC 2705 / NBRC 14298) protein is Replication restart protein PriB.